Consider the following 555-residue polypeptide: Transmembrane protein 87A (555 aa).

Positions 1–21 (MAVAAWLQVSPVIFLLLGAQP) are cleaved as a signal peptide. The Lumenal portion of the chain corresponds to 22–225 (FPLSFLGAGP…YEYLTLEDYP (204 aa)). Intrachain disulfides connect C74-C128 and C89-C431. N79, N157, and N160 each carry an N-linked (GlcNAc...) asparagine glycan. The helical transmembrane segment at 226 to 246 (LMIFFMVMCIVYVLFGVLWLA) threads the bilayer. Residues 247-257 (WSACYWRDLLR) are Cytoplasmic-facing. The chain crosses the membrane as a helical span at residues 258–278 (IQFWIGAVIFLGMFEKAVFYA). Over 279 to 305 (EFQNIRYKGESVQNALVLAELLSAVKR) the chain is Lumenal. Residues 306 to 322 (SLARTLVIIVSLGYGIV) traverse the membrane as a helical segment. The Cytoplasmic portion of the chain corresponds to 323 to 325 (KPR). The helical transmembrane segment at 326–346 (LGVTLHKVVVAGALYLLFSGM) threads the bilayer. At 347-361 (EGVLRVTGAQTDLAS) the chain is on the lumenal side. The chain crosses the membrane as a helical span at residues 362–382 (LAFIPLAFLDTALCWWIFISL). Topologically, residues 383-403 (TQTMKLLKLRRNIVKLSLYRH) are cytoplasmic. Residues 404 to 424 (FTNTLILAVAASIVFIIWTTM) form a helical membrane-spanning segment. Topologically, residues 425 to 437 (KFRIVTCQSDWRE) are lumenal. A helical membrane pass occupies residues 438 to 458 (LWVDDAIWRLLFSMILFVIMI). Topologically, residues 459 to 555 (LWRPSANNQR…ITHFERSKME (97 aa)) are cytoplasmic. The disordered stretch occupies residues 491–515 (SFEGMKMRSTKQEPNGTSKVNKAQE). Positions 502–511 (QEPNGTSKVN) are enriched in polar residues. S540 is modified (phosphoserine).

Belongs to the LU7TM family. TMEM87 subfamily. As to quaternary structure, may interact with STOML3; STOML3 potentiates the mechanosensitive ion channel activity associated with TMEM87A. Highly expressed in sensory neurons responsive to mechanical force.

It localises to the cell membrane. It is found in the golgi apparatus membrane. Its subcellular location is the cell projection. The protein resides in the ruffle. Potential monoatomic ion channel gated by mechanical force, implicated in normal touch sensitivity through the generation of mechanically activated currents. However, a direct channel activity is debated and an alternative could be that it functions as a chaperone for an unidentified mechanosensitive ion channel. Could also be involved in cell mechanosensitivity regulating cell adhesion and migration. May also be involved in retrograde transport from endosomes to the trans-Golgi network (TGN). The chain is Transmembrane protein 87A from Mus musculus (Mouse).